The sequence spans 220 residues: Glutathione peroxidase (220 aa).

Sec64 is an active-site residue. Position 64 (Sec64) is a non-standard amino acid, selenocysteine.

The protein belongs to the glutathione peroxidase family. In terms of processing, during periods of oxidative stress, Sec-64 may react with a superoxide radical, irreversibly lose hydroselenide and be converted to dehydroalanine.

The enzyme catalyses 2 glutathione + H2O2 = glutathione disulfide + 2 H2O. Its function is as follows. May protect the virus and component of infected cells from oxidative damage by peroxides whose formation may be stimulated by infection. This Homo sapiens (Human) protein is Glutathione peroxidase (GPX1).